A 214-amino-acid chain; its full sequence is Ribonuclease HII (214 aa).

One can recognise an RNase H type-2 domain in the interval 26–214; it reads EIVCGVDEAG…PVREAFDLIR (189 aa). Positions 32, 33, and 124 each coordinate a divalent metal cation.

It belongs to the RNase HII family. It depends on Mn(2+) as a cofactor. The cofactor is Mg(2+).

It is found in the cytoplasm. It catalyses the reaction Endonucleolytic cleavage to 5'-phosphomonoester.. Endonuclease that specifically degrades the RNA of RNA-DNA hybrids. The polypeptide is Ribonuclease HII (Burkholderia pseudomallei (strain 1710b)).